The primary structure comprises 731 residues: Elongation factor 2 (731 aa).

Residues 19–260 form the tr-type G domain; sequence KHIRNIGIVA…MVVHHLPNPL (242 aa). GTP contacts are provided by residues 28–35, 94–98, and 148–151; these read AHIDHGKT, DTPGH, and NKVD. Residue His-597 is modified to Diphthamide.

This sequence belongs to the TRAFAC class translation factor GTPase superfamily. Classic translation factor GTPase family. EF-G/EF-2 subfamily.

The protein resides in the cytoplasm. In terms of biological role, catalyzes the GTP-dependent ribosomal translocation step during translation elongation. During this step, the ribosome changes from the pre-translocational (PRE) to the post-translocational (POST) state as the newly formed A-site-bound peptidyl-tRNA and P-site-bound deacylated tRNA move to the P and E sites, respectively. Catalyzes the coordinated movement of the two tRNA molecules, the mRNA and conformational changes in the ribosome. The protein is Elongation factor 2 of Methanoregula boonei (strain DSM 21154 / JCM 14090 / 6A8).